Consider the following 123-residue polypeptide: Small ribosomal subunit protein uS13 (123 aa).

Positions 97-123 (PVRGQRTHTNAKTRKGRSKLPVAAKKK) are disordered.

The protein belongs to the universal ribosomal protein uS13 family. In terms of assembly, part of the 30S ribosomal subunit. Forms a loose heterodimer with protein S19. Forms two bridges to the 50S subunit in the 70S ribosome.

Functionally, located at the top of the head of the 30S subunit, it contacts several helices of the 16S rRNA. In the 70S ribosome it contacts the 23S rRNA (bridge B1a) and protein L5 of the 50S subunit (bridge B1b), connecting the 2 subunits; these bridges are implicated in subunit movement. Contacts the tRNAs in the A and P-sites. This is Small ribosomal subunit protein uS13 from Ehrlichia canis (strain Jake).